Consider the following 263-residue polypeptide: Hydroxyethylthiazole kinase (263 aa).

Residue M39 coordinates substrate. Positions 115 and 160 each coordinate ATP. G187 contributes to the substrate binding site.

The protein belongs to the Thz kinase family. Requires Mg(2+) as cofactor.

The catalysed reaction is 5-(2-hydroxyethyl)-4-methylthiazole + ATP = 4-methyl-5-(2-phosphooxyethyl)-thiazole + ADP + H(+). It functions in the pathway cofactor biosynthesis; thiamine diphosphate biosynthesis; 4-methyl-5-(2-phosphoethyl)-thiazole from 5-(2-hydroxyethyl)-4-methylthiazole: step 1/1. Its function is as follows. Catalyzes the phosphorylation of the hydroxyl group of 4-methyl-5-beta-hydroxyethylthiazole (THZ). The protein is Hydroxyethylthiazole kinase of Staphylococcus aureus (strain COL).